The sequence spans 476 residues: Inner membrane transporter YcaM (476 aa).

Residues 1-9 (MAGNVQEKQ) are Cytoplasmic-facing. The helical transmembrane segment at 10–30 (LRWYNIALMSFITVWGFGNVV) threads the bilayer. Residues 31-38 (NNYANQGL) are Periplasmic-facing. Residues 39–59 (VVVFSWVFIFALYFTPYALIV) form a helical membrane-spanning segment. Residues 60 to 80 (GQLGSTFKDGKGGVSTWIKHT) are Cytoplasmic-facing. The helical transmembrane segment at 81-101 (MGPGLAYLAAWTYWVVHIPYL) threads the bilayer. At 102-125 (AQKPQAILIALGWAMKGDGSLIKE) the chain is on the periplasmic side. The chain crosses the membrane as a helical span at residues 126-146 (YSVVALQGLTLVLFIFFMWVA). Topologically, residues 147 to 154 (SRGMKSLK) are cytoplasmic. Residues 155–175 (IVGSVAGIAMFVMSLLYVAMA) form a helical membrane-spanning segment. Residues 176–195 (VTAPAITEVHIATTNITWET) are Periplasmic-facing. A helical membrane pass occupies residues 196 to 216 (FIPHIDFTYITTISMLVFAVG). Residues 217–240 (GAEKISPYVNQTRNPGKEFPKGML) lie on the Cytoplasmic side of the membrane. A helical transmembrane segment spans residues 241–261 (CLAVMVAVCAILGSLAMGMMF). The Periplasmic portion of the chain corresponds to 262-291 (DSRNIPDDLMTNGQYYAFQKLGEYYNMGNT). Residues 292–312 (LMVIYAIANTLGQVAALVFSI) traverse the membrane as a helical segment. Residues 313-343 (DAPLKVLLGDADSKYIPASLCRTNASGTPVN) lie on the Cytoplasmic side of the membrane. The helical transmembrane segment at 344–364 (GYFLTLVLVAILIMLPTLGIG) threads the bilayer. The Periplasmic portion of the chain corresponds to 365–375 (DMNNLYKWLLN). The chain crosses the membrane as a helical span at residues 376–396 (LNSVVMPLRYLWVFVAFIAVV). The Cytoplasmic portion of the chain corresponds to 397–414 (RLAQKYKPEYVFIRNKPL). Residues 415–435 (AMTVGIWCFAFTAFACLTGIF) traverse the membrane as a helical segment. The Periplasmic portion of the chain corresponds to 436–448 (PKMEAFTAEWTFQ). The helical transmembrane segment at 449-469 (LALNVATPFVLVGLGLIFPLL) threads the bilayer. Over 470 to 476 (ARKANSK) the chain is Cytoplasmic.

The protein belongs to the amino acid-polyamine-organocation (APC) superfamily.

It is found in the cell inner membrane. This is Inner membrane transporter YcaM (ycaM) from Escherichia coli (strain K12).